Here is a 305-residue protein sequence, read N- to C-terminus: tRNA pseudouridine synthase B (305 aa).

Asp-41 (nucleophile) is an active-site residue.

Belongs to the pseudouridine synthase TruB family. Type 1 subfamily.

It catalyses the reaction uridine(55) in tRNA = pseudouridine(55) in tRNA. In terms of biological role, responsible for synthesis of pseudouridine from uracil-55 in the psi GC loop of transfer RNAs. The polypeptide is tRNA pseudouridine synthase B (Prochlorococcus marinus (strain MIT 9515)).